The sequence spans 1123 residues: Rabphilin-1 (1123 aa).

Basic residues predominate over residues 1 to 17 (MTKSTKLRHCKQKKKKP). Disordered regions lie at residues 1 to 56 (MTKS…GSRS) and 88 to 140 (SAHN…PSTH). Residues 36 to 46 (DAATTTSTTDA) are compositionally biased toward low complexity. The RabBD domain maps to 215–341 (KAQTGSITAA…KKSGAWFYKE (127 aa)). An FYVE-type zinc finger spans residues 263 to 328 (GNGVTHCLLC…LCKICSEARE (66 aa)). Zn(2+)-binding residues include Cys269, Cys272, Cys288, Cys291, Cys296, Cys300, Cys320, and Cys323. Polar residues-rich tracts occupy residues 365 to 375 (PNASSAATPLS), 387 to 400 (TMPSTSSCQMTTPK), 410 to 428 (PGLQMNGGPTSPLPNGTRR), and 487 to 497 (ASSSDGESFVQ). 3 disordered regions span residues 365-710 (PNAS…VGSA), 737-779 (TSRA…LRTS), and 796-818 (HIVSSEPTSSTTSNQNHTSVPIP). A compositionally biased stretch (basic and acidic residues) spans 531–541 (SRREANMERFS). Positions 563–574 (ESRPSTRSTSPR) are enriched in low complexity. Composition is skewed to polar residues over residues 605-632 (VVQSDHSNPQQSGLTCSSSSLTPLQQQA) and 649-666 (PDRTTSRVAQSASGTSLV). A compositionally biased stretch (low complexity) spans 742 to 753 (SPLAASSSFLSS). Basic and acidic residues predominate over residues 756 to 768 (DDTKQKNRRRDGV). The segment covering 803 to 818 (TSSTTSNQNHTSVPIP) has biased composition (low complexity). C2 domains follow at residues 844-967 (SLGS…NLYL) and 984-1103 (DRGK…RQWI). Residues Asp875, Asp881, Asp936, Asp938, Asp943, Asp1015, Asp1021, Asp1075, Asp1077, and Asp1083 each coordinate Ca(2+).

The cofactor is Ca(2+).

The protein resides in the synapse. In terms of biological role, rab-3 effector. This chain is Rabphilin-1 (rbf-1), found in Caenorhabditis elegans.